The following is a 295-amino-acid chain: Protoheme IX farnesyltransferase (295 aa).

9 helical membrane passes run 30-50 (LVVL…HPLI), 51-71 (AVIS…INMW), 93-115 (ISRS…IMMI), 119-136 (YISG…IYVY), 148-168 (IVIG…SVTG), 175-195 (LVLF…LSLL), 219-239 (IHIL…GLFL), 244-264 (LYEI…FQVF), and 275-295 (MFTY…LSSF).

Belongs to the UbiA prenyltransferase family. Protoheme IX farnesyltransferase subfamily.

The protein localises to the cell inner membrane. The enzyme catalyses heme b + (2E,6E)-farnesyl diphosphate + H2O = Fe(II)-heme o + diphosphate. Its pathway is porphyrin-containing compound metabolism; heme O biosynthesis; heme O from protoheme: step 1/1. Converts heme B (protoheme IX) to heme O by substitution of the vinyl group on carbon 2 of heme B porphyrin ring with a hydroxyethyl farnesyl side group. The polypeptide is Protoheme IX farnesyltransferase (Ehrlichia ruminantium (strain Gardel)).